Here is a 455-residue protein sequence, read N- to C-terminus: Bifunctional protein GlmU (455 aa).

The tract at residues 1 to 230 is pyrophosphorylase; the sequence is MVNKNAIILA…FDESMGVNDR (230 aa). UDP-N-acetyl-alpha-D-glucosamine-binding positions include 9-12, Lys-23, Gln-73, 78-79, 101-103, Gly-140, Glu-155, Asn-170, and Asn-228; these read LAAG, GT, and SGD. Asp-103 lines the Mg(2+) pocket. A Mg(2+)-binding site is contributed by Asn-228. Positions 231–251 are linker; it reads SALAKATKIMQKRINTQLMKD. The N-acetyltransferase stretch occupies residues 252 to 455; the sequence is GVTLVDPETA…KPGYAKKLPW (204 aa). UDP-N-acetyl-alpha-D-glucosamine-binding residues include Arg-333 and Lys-351. The active-site Proton acceptor is His-363. UDP-N-acetyl-alpha-D-glucosamine contacts are provided by Tyr-366 and Asn-377. Acetyl-CoA contacts are provided by residues 386 to 387, Ser-405, Ala-423, and Arg-440; that span reads NY.

The protein in the N-terminal section; belongs to the N-acetylglucosamine-1-phosphate uridyltransferase family. It in the C-terminal section; belongs to the transferase hexapeptide repeat family. In terms of assembly, homotrimer. Mg(2+) serves as cofactor.

It localises to the cytoplasm. The catalysed reaction is alpha-D-glucosamine 1-phosphate + acetyl-CoA = N-acetyl-alpha-D-glucosamine 1-phosphate + CoA + H(+). The enzyme catalyses N-acetyl-alpha-D-glucosamine 1-phosphate + UTP + H(+) = UDP-N-acetyl-alpha-D-glucosamine + diphosphate. It functions in the pathway nucleotide-sugar biosynthesis; UDP-N-acetyl-alpha-D-glucosamine biosynthesis; N-acetyl-alpha-D-glucosamine 1-phosphate from alpha-D-glucosamine 6-phosphate (route II): step 2/2. The protein operates within nucleotide-sugar biosynthesis; UDP-N-acetyl-alpha-D-glucosamine biosynthesis; UDP-N-acetyl-alpha-D-glucosamine from N-acetyl-alpha-D-glucosamine 1-phosphate: step 1/1. It participates in bacterial outer membrane biogenesis; LPS lipid A biosynthesis. Its function is as follows. Catalyzes the last two sequential reactions in the de novo biosynthetic pathway for UDP-N-acetylglucosamine (UDP-GlcNAc). The C-terminal domain catalyzes the transfer of acetyl group from acetyl coenzyme A to glucosamine-1-phosphate (GlcN-1-P) to produce N-acetylglucosamine-1-phosphate (GlcNAc-1-P), which is converted into UDP-GlcNAc by the transfer of uridine 5-monophosphate (from uridine 5-triphosphate), a reaction catalyzed by the N-terminal domain. The sequence is that of Bifunctional protein GlmU from Limosilactobacillus fermentum (strain NBRC 3956 / LMG 18251) (Lactobacillus fermentum).